Reading from the N-terminus, the 96-residue chain is Glutamyl-tRNA(Gln) amidotransferase subunit C (96 aa).

It belongs to the GatC family. As to quaternary structure, heterotrimer of A, B and C subunits.

The catalysed reaction is L-glutamyl-tRNA(Gln) + L-glutamine + ATP + H2O = L-glutaminyl-tRNA(Gln) + L-glutamate + ADP + phosphate + H(+). The enzyme catalyses L-aspartyl-tRNA(Asn) + L-glutamine + ATP + H2O = L-asparaginyl-tRNA(Asn) + L-glutamate + ADP + phosphate + 2 H(+). Its function is as follows. Allows the formation of correctly charged Asn-tRNA(Asn) or Gln-tRNA(Gln) through the transamidation of misacylated Asp-tRNA(Asn) or Glu-tRNA(Gln) in organisms which lack either or both of asparaginyl-tRNA or glutaminyl-tRNA synthetases. The reaction takes place in the presence of glutamine and ATP through an activated phospho-Asp-tRNA(Asn) or phospho-Glu-tRNA(Gln). The chain is Glutamyl-tRNA(Gln) amidotransferase subunit C from Halalkalibacterium halodurans (strain ATCC BAA-125 / DSM 18197 / FERM 7344 / JCM 9153 / C-125) (Bacillus halodurans).